The primary structure comprises 292 residues: ATP synthase gamma chain (292 aa).

It belongs to the ATPase gamma chain family. As to quaternary structure, F-type ATPases have 2 components, CF(1) - the catalytic core - and CF(0) - the membrane proton channel. CF(1) has five subunits: alpha(3), beta(3), gamma(1), delta(1), epsilon(1). CF(0) has three main subunits: a, b and c.

It localises to the cell inner membrane. Produces ATP from ADP in the presence of a proton gradient across the membrane. The gamma chain is believed to be important in regulating ATPase activity and the flow of protons through the CF(0) complex. The polypeptide is ATP synthase gamma chain (Brucella anthropi (strain ATCC 49188 / DSM 6882 / CCUG 24695 / JCM 21032 / LMG 3331 / NBRC 15819 / NCTC 12168 / Alc 37) (Ochrobactrum anthropi)).